The chain runs to 367 residues: Nuclear hormone receptor-like 1 (367 aa).

The segment at residues 32-107 is a DNA-binding region (nuclear receptor); the sequence is GQPCVVCGDD…NGMTKSLVLN (76 aa). 2 consecutive NR C4-type zinc fingers follow at residues 35 to 55 and 71 to 95; these read CVVC…CEGC and CKSI…FQKC. In terms of domain architecture, NR LBD spans 145–367; sequence EFQSRIDQVT…IANILLFKFT (223 aa).

It belongs to the nuclear hormone receptor family.

It localises to the nucleus. This chain is Nuclear hormone receptor-like 1 (nhr-1), found in Onchocerca volvulus.